The chain runs to 173 residues: Calcium-binding protein 5 (173 aa).

EF-hand domains follow at residues 28 to 63 (DEIE…MGYM), 82 to 99 (GRVD…KLLA), 105 to 140 (IGVQ…LLGD), and 142 to 173 (LTSQ…MMSR). Ca(2+)-binding residues include aspartate 41, aspartate 43, aspartate 45, and aspartate 52. Ca(2+)-binding residues include aspartate 118, asparagine 120, aspartate 122, glutamate 124, glutamate 129, aspartate 155, asparagine 157, aspartate 159, threonine 161, and glutamate 166.

In terms of assembly, interacts with CACNA1C (via C-terminal CDB motif) in a calcium-dependent manner. Interacts with STXBP1. Interacts with MYO6. As to expression, expressed in the retina (at protein level).

It localises to the cytoplasm. In terms of biological role, inhibits calcium-dependent inactivation of L-type calcium channel and shifts voltage dependence of activation to more depolarized membrane potentials. Involved in the transmission of light signals. May positively regulate neurotransmitter vesicle endocytosis and exocytosis in a salt-dependent manner. May play a role in the extension and network organization of neurites. The protein is Calcium-binding protein 5 (CABP5) of Bos taurus (Bovine).